The chain runs to 158 residues: Transcription elongation factor GreA (158 aa).

Residues 45 to 72 (AEYHAAREQQSFIEGRIKQLEGELSHAE) are a coiled coil.

It belongs to the GreA/GreB family.

Its function is as follows. Necessary for efficient RNA polymerase transcription elongation past template-encoded arresting sites. The arresting sites in DNA have the property of trapping a certain fraction of elongating RNA polymerases that pass through, resulting in locked ternary complexes. Cleavage of the nascent transcript by cleavage factors such as GreA or GreB allows the resumption of elongation from the new 3'terminus. GreA releases sequences of 2 to 3 nucleotides. In Xylella fastidiosa (strain M12), this protein is Transcription elongation factor GreA.